The sequence spans 548 residues: Pentatricopeptide repeat-containing protein At1g62680, mitochondrial (548 aa).

The N-terminal 43 residues, 1-43 (MQRSIAMTAKRFLHRNLLENGKPRTASSPSFSHCSSCRCWVRA), are a transit peptide targeting the mitochondrion. PPR repeat units lie at residues 84-118 (SIVD…GIRN), 119-153 (DLYT…GYEP), 154-188 (DRVT…GYKP), 189-223 (DIVA…GIRP), 224-258 (NVVT…KITP), 259-293 (NVIT…SIDP), 294-328 (DIVT…GCLA), 329-363 (DVVS…GLVS), 364-398 (NTVT…GISP), 399-433 (DIWT…EMDL), 434-468 (DIVT…GLKP), and 469-503 (DIVT…GLMK).

This sequence belongs to the PPR family. P subfamily.

The protein localises to the mitochondrion. The chain is Pentatricopeptide repeat-containing protein At1g62680, mitochondrial from Arabidopsis thaliana (Mouse-ear cress).